Consider the following 488-residue polypeptide: Germacrene A hydroxylase (488 aa).

The Cytoplasmic portion of the chain corresponds to 1-6 (MEVSLT). Residues 7-23 (TSIALATIVFFLYKLLT) form a helical; Signal-anchor for type II membrane protein membrane-spanning segment. The Lumenal segment spans residues 24-488 (RPTSSKNRLP…KTELMLVPSF (465 aa)). Asn169, Asn260, Asn379, and Asn412 each carry an N-linked (GlcNAc...) asparagine glycan. Heme is bound at residue Cys432.

It belongs to the cytochrome P450 family. Requires heme as cofactor. Expressed in leaf primordia.

It is found in the endoplasmic reticulum membrane. It catalyses the reaction (+)-(R)-germacrene A + 3 reduced [NADPH--hemoprotein reductase] + 3 O2 = germacra-1(10),4,11(13)-trien-12-oate + 3 oxidized [NADPH--hemoprotein reductase] + 4 H2O + 4 H(+). It functions in the pathway secondary metabolite biosynthesis; terpenoid biosynthesis. Involved in the biosynthesis of germacrene-derived sesquiterpene lactones. Catalyzes three consecutive oxidations of germacrene A to produce germacrene A acid. Could also catalyze the three-step oxidation of non-natural substrate amorphadiene to artemisinic acid. The sequence is that of Germacrene A hydroxylase from Helianthus annuus (Common sunflower).